The chain runs to 341 residues: Biotin synthase (341 aa).

Positions 40–267 constitute a Radical SAM core domain; it reads AEIQVSTLLS…RSMVRLSAGR (228 aa). 3 residues coordinate [4Fe-4S] cluster: C55, C59, and C62. [2Fe-2S] cluster is bound by residues C99, C130, C190, and R262.

It belongs to the radical SAM superfamily. Biotin synthase family. As to quaternary structure, homodimer. Requires [4Fe-4S] cluster as cofactor. [2Fe-2S] cluster is required as a cofactor.

It carries out the reaction (4R,5S)-dethiobiotin + (sulfur carrier)-SH + 2 reduced [2Fe-2S]-[ferredoxin] + 2 S-adenosyl-L-methionine = (sulfur carrier)-H + biotin + 2 5'-deoxyadenosine + 2 L-methionine + 2 oxidized [2Fe-2S]-[ferredoxin]. Its pathway is cofactor biosynthesis; biotin biosynthesis; biotin from 7,8-diaminononanoate: step 2/2. In terms of biological role, catalyzes the conversion of dethiobiotin (DTB) to biotin by the insertion of a sulfur atom into dethiobiotin via a radical-based mechanism. The sequence is that of Biotin synthase from Xylella fastidiosa (strain 9a5c).